The chain runs to 1438 residues: DNA polymerase III PolC-type (1438 aa).

The 157-residue stretch at 422 to 578 folds into the Exonuclease domain; it reads YVVFDVETTG…YDTESTAYIF (157 aa).

It belongs to the DNA polymerase type-C family. PolC subfamily.

Its subcellular location is the cytoplasm. It carries out the reaction DNA(n) + a 2'-deoxyribonucleoside 5'-triphosphate = DNA(n+1) + diphosphate. Functionally, required for replicative DNA synthesis. This DNA polymerase also exhibits 3' to 5' exonuclease activity. This Staphylococcus haemolyticus (strain JCSC1435) protein is DNA polymerase III PolC-type.